The chain runs to 421 residues: BEN domain-containing protein 5 (421 aa).

Position 133 is an N6-acetyllysine (Lys-133). The stretch at 180–243 forms a coiled coil; sequence RALYEELLRN…LNRRLQDVLL (64 aa). A Glycyl lysine isopeptide (Lys-Gly) (interchain with G-Cter in SUMO2) cross-link involves residue Lys-258. Positions 302 to 408 constitute a BEN domain; the sequence is GSGIWVDEEK…EKIMDINKSC (107 aa).

Its function is as follows. Acts as a transcriptional repressor. This chain is BEN domain-containing protein 5 (BEND5), found in Homo sapiens (Human).